The primary structure comprises 102 residues: Small ribosomal subunit protein uS10 (102 aa).

It belongs to the universal ribosomal protein uS10 family. As to quaternary structure, part of the 30S ribosomal subunit.

Functionally, involved in the binding of tRNA to the ribosomes. This Methylocella silvestris (strain DSM 15510 / CIP 108128 / LMG 27833 / NCIMB 13906 / BL2) protein is Small ribosomal subunit protein uS10.